The following is a 95-amino-acid chain: Aspartyl/glutamyl-tRNA(Asn/Gln) amidotransferase subunit C (95 aa).

The protein belongs to the GatC family. In terms of assembly, heterotrimer of A, B and C subunits.

The enzyme catalyses L-glutamyl-tRNA(Gln) + L-glutamine + ATP + H2O = L-glutaminyl-tRNA(Gln) + L-glutamate + ADP + phosphate + H(+). It carries out the reaction L-aspartyl-tRNA(Asn) + L-glutamine + ATP + H2O = L-asparaginyl-tRNA(Asn) + L-glutamate + ADP + phosphate + 2 H(+). Functionally, allows the formation of correctly charged Asn-tRNA(Asn) or Gln-tRNA(Gln) through the transamidation of misacylated Asp-tRNA(Asn) or Glu-tRNA(Gln) in organisms which lack either or both of asparaginyl-tRNA or glutaminyl-tRNA synthetases. The reaction takes place in the presence of glutamine and ATP through an activated phospho-Asp-tRNA(Asn) or phospho-Glu-tRNA(Gln). In Methylococcus capsulatus (strain ATCC 33009 / NCIMB 11132 / Bath), this protein is Aspartyl/glutamyl-tRNA(Asn/Gln) amidotransferase subunit C.